Reading from the N-terminus, the 255-residue chain is Post-GPI attachment to proteins factor 2 (255 aa).

The next 5 helical transmembrane spans lie at 23–43 (LALVALSLPLGGFFFCVIWSL), 111–131 (LGILACFLNVVEDLALFCLSF), 143–163 (NAFVVFIACSECYMLVSYLLN), 185–205 (LFLVNVIAFGLAGYCFVRHNS), and 209–229 (AGVYTFFALFEYIVVLTNMGF).

This sequence belongs to the PGAP2 family.

Its subcellular location is the golgi apparatus membrane. The protein resides in the endoplasmic reticulum membrane. In terms of biological role, involved in the lipid remodeling steps of GPI-anchor maturation. Required for stable expression of GPI-anchored proteins at the cell surface. The polypeptide is Post-GPI attachment to proteins factor 2 (Drosophila melanogaster (Fruit fly)).